The chain runs to 35 residues: Mu-theraphotoxin-Pn3b (35 aa).

3 disulfide bridges follow: Cys-2–Cys-16, Cys-9–Cys-21, and Cys-15–Cys-28.

This sequence belongs to the neurotoxin 10 (Hwtx-1) family. 28 (Jztx-11) subfamily. As to expression, expressed by the venom gland.

The protein resides in the secreted. In terms of biological role, gating-modifier toxin that targets voltage-gated sodium channels with a preferential activity on Nav1.7/SCN9A. On Nav1.7/SCN9A, the toxin acts by shifting the voltage-dependence of activation to more depolarized potentials, whereas it does not cause significant effect on the voltage-dependence of activation on other sodium channels. Minor effects are observed on the voltage-dependence of steady-state fast inactivation for all sodium channels tested (Nav1.1/SCN1A-Nav1.8/SCN10A). By testing the toxin on channel chimera, it has been shown to interact with the S3-S4 linkers in DII and DIV domains of Nav1.7/SCN9A. In vivo, the toxin dose-dependently reduces OD1-induced spontaneous pain behaviors. This chain is Mu-theraphotoxin-Pn3b, found in Pamphobeteus nigricolor (Giant blue bloom tarantula).